A 505-amino-acid chain; its full sequence is Sensor protein FixL (505 aa).

Residues 14 to 85 enclose the PAS 1 domain; it reads RGEHFRVRIE…SAIKRVSERG (72 aa). One can recognise a PAC 1 domain in the interval 88–140; it reads FDVSFRVAGTSNAGQWIRARAGLIRDEAGTARHLSGIFLDIDEEKQVEGALRT. Positions 141 to 208 constitute a PAS 2 domain; sequence RETHLRSILH…RHDSYISRYR (68 aa). H200 serves as a coordination point for heme. Positions 209 to 268 constitute a PAC 2 domain; it reads TTSDPHIIGIGRIVTGKRRDGTTFPMHLSIGEMQSGGEPYFTGFVRDLTEHQQTQARLQE. A Histidine kinase domain is found at 288–503; the sequence is ALAHELNQPL…TFRFTLPAAD (216 aa). H291 carries the phosphohistidine; by autocatalysis modification.

Requires heme as cofactor.

The catalysed reaction is ATP + protein L-histidine = ADP + protein N-phospho-L-histidine.. The heme moiety regulates the kinase activity. Its function is as follows. Putative oxygen sensor; modulates the activity of FixJ, a transcriptional activator of nitrogen fixation fixK gene. FixL probably acts as a kinase that phosphorylates FixJ. The polypeptide is Sensor protein FixL (fixL) (Bradyrhizobium diazoefficiens (strain JCM 10833 / BCRC 13528 / IAM 13628 / NBRC 14792 / USDA 110)).